The sequence spans 240 residues: Urease accessory protein UreF (240 aa).

Belongs to the UreF family. As to quaternary structure, ureD, UreF and UreG form a complex that acts as a GTP-hydrolysis-dependent molecular chaperone, activating the urease apoprotein by helping to assemble the nickel containing metallocenter of UreC. The UreE protein probably delivers the nickel.

It is found in the cytoplasm. Functionally, required for maturation of urease via the functional incorporation of the urease nickel metallocenter. The chain is Urease accessory protein UreF from Bradyrhizobium sp. (strain ORS 278).